We begin with the raw amino-acid sequence, 717 residues long: Nuclear factor of activated T-cells, cytoplasmic 1 (717 aa).

The tract at residues 1-38 is disordered; that stretch reads MPNTSFPVPSKFPLGPPAAVCGSGETLRPAPPSGGTMK. The interval 120 to 125 is calcineurin-binding; the sequence is PRIEIT. Positions 128-220 are transactivation domain A (TAD-A); that stretch reads LGLHHGSGQF…CVSPKTTDPE (93 aa). A disordered region spans residues 202-298; sequence PQTSPWQSPC…PHGSPRVSVT (97 aa). Positions 203–216 are enriched in polar residues; it reads QTSPWQSPCVSPKT. 2 tandem repeats follow at residues 205 to 221 and 235 to 251. Residues 205–300 are 3 X SP repeats; it reads SPWQSPCVSP…GSPRVSVTED (96 aa). Phosphoserine is present on residues serine 235 and serine 239. A compositionally biased stretch (polar residues) spans 238-250; that stretch reads HSPSTSPRASITE. Serine 247 carries the phosphoserine; by PKA modification. The Nuclear localization signal signature appears at 267–269; the sequence is KRK. A phosphoserine; by PKA mark is found at serine 271 and serine 296. Repeat unit 3 spans residues 284–300; sequence SPTPSPHGSPRVSVTED. A Nuclear export signal motif is present at residues 312 to 323; the sequence is SAIVAAINALTT. The RHD domain maps to 411-593; it reads PSLPALDWQL…NPIECSQRSA (183 aa). The DNA-binding element occupies 440 to 447; that stretch reads RAHYETEG. A Nuclear localization signal motif is present at residues 683-685; it reads KRK.

In terms of assembly, member of the multicomponent NFATC transcription complex that consists of at least two components, a pre-existing cytoplasmic component NFATC2 and an inducible nuclear component NFATC1. Other members such as NFATC4, NFATC3 or members of the activating protein-1 family, MAF, GATA4 and Cbp/p300 can also bind the complex. NFATC proteins bind to DNA as monomers. Interacts with HOMER2 and HOMER3; this interaction may compete with calcineurin/PPP3CA-binding and hence prevent NFATC1 dephosphorylation and activation. Interacts with TLE6/GRG6. Phosphorylated by NFATC-kinase and GSK3B; phosphorylation induces NFATC1 nuclear exit and dephosphorylation by calcineurin promotes nuclear import. Phosphorylation by PKA and DYRK2 negatively modulates nuclear accumulation, and promotes subsequent phosphorylation by GSK3B or casein kinase 1. As to expression, expressed in the submandibular gland (at protein level). Expressed in basal epidermal cells (at protein level). Expressed in spleen, skeletal muscle and skin. Express in the lung and thymus. Weakly expressed in heart, brain, liver and kidney. Not expressed in testis. Expressed in osteoclasts. Also expressed during TNFSF11/RANKL-induced differentiation of bone marrow-derived macrophages to osteoclasts.

The protein localises to the cytoplasm. It localises to the nucleus. Functionally, plays a role in the inducible expression of cytokine genes in T-cells, especially in the induction of the IL-2 or IL-4 gene transcription. Also controls gene expression in embryonic cardiac cells. Could regulate not only the activation and proliferation but also the differentiation and programmed death of T-lymphocytes as well as lymphoid and non-lymphoid cells. Required for osteoclastogenesis and regulates many genes important for osteoclast differentiation and function. The sequence is that of Nuclear factor of activated T-cells, cytoplasmic 1 (Nfatc1) from Mus musculus (Mouse).